A 560-amino-acid polypeptide reads, in one-letter code: S100P-binding protein (560 aa).

Disordered regions lie at residues Ser259–Pro292 and Ser313–Phe400. Over residues Ser313 to Lys352 the composition is skewed to polar residues. Residues Gln378–Pro387 are compositionally biased toward basic and acidic residues.

Its subcellular location is the nucleus. The chain is S100P-binding protein (s100pbp) from Xenopus laevis (African clawed frog).